The primary structure comprises 362 residues: 2-aminoethylphosphonate--pyruvate transaminase (362 aa).

Lysine 193 is subject to N6-(pyridoxal phosphate)lysine.

It belongs to the class-V pyridoxal-phosphate-dependent aminotransferase family. PhnW subfamily. As to quaternary structure, homodimer. Pyridoxal 5'-phosphate is required as a cofactor.

The enzyme catalyses (2-aminoethyl)phosphonate + pyruvate = phosphonoacetaldehyde + L-alanine. In terms of biological role, involved in phosphonate degradation. This Phocaeicola vulgatus (strain ATCC 8482 / DSM 1447 / JCM 5826 / CCUG 4940 / NBRC 14291 / NCTC 11154) (Bacteroides vulgatus) protein is 2-aminoethylphosphonate--pyruvate transaminase.